Here is a 173-residue protein sequence, read N- to C-terminus: T-complex protein 1 subunit alpha (173 aa).

The protein belongs to the TCP-1 chaperonin family. As to quaternary structure, component of the chaperonin-containing T-complex (TRiC), a heterooligomeric complex of about 850 to 900 kDa that forms two stacked rings, 12 to 16 nm in diameter.

Its subcellular location is the cytoplasm. It is found in the cytosol. In terms of biological role, component of the chaperonin-containing T-complex (TRiC), a molecular chaperone complex that assists the folding of proteins upon ATP hydrolysis. The protein is T-complex protein 1 subunit alpha of Ambystoma mexicanum (Axolotl).